Reading from the N-terminus, the 554-residue chain is uncharacterized protein (554 aa).

Positions 1-33 (MKKILIIILFIIIFIVLIYSGLWFVIMFSLSHS) are cleaved as a signal peptide.

This is an uncharacterized protein from Rickettsia prowazekii (strain Madrid E).